We begin with the raw amino-acid sequence, 609 residues long: Glutamine--fructose-6-phosphate aminotransferase [isomerizing] (609 aa).

Cys2 serves as the catalytic Nucleophile; for GATase activity. One can recognise a Glutamine amidotransferase type-2 domain in the interval 2–218; that stretch reads CGIVGAVAQR…EGDVAEVTRR (217 aa). 2 SIS domains span residues 286-426 and 458-599; these read AAEF…HNGM and LAED…VDQP. Lys604 (for Fru-6P isomerization activity) is an active-site residue.

As to quaternary structure, homodimer.

It is found in the cytoplasm. It carries out the reaction D-fructose 6-phosphate + L-glutamine = D-glucosamine 6-phosphate + L-glutamate. In terms of biological role, catalyzes the first step in hexosamine metabolism, converting fructose-6P into glucosamine-6P using glutamine as a nitrogen source. The sequence is that of Glutamine--fructose-6-phosphate aminotransferase [isomerizing] from Shewanella oneidensis (strain ATCC 700550 / JCM 31522 / CIP 106686 / LMG 19005 / NCIMB 14063 / MR-1).